A 195-amino-acid polypeptide reads, in one-letter code: Imidazoleglycerol-phosphate dehydratase (195 aa).

It belongs to the imidazoleglycerol-phosphate dehydratase family.

The protein localises to the cytoplasm. It catalyses the reaction D-erythro-1-(imidazol-4-yl)glycerol 3-phosphate = 3-(imidazol-4-yl)-2-oxopropyl phosphate + H2O. It functions in the pathway amino-acid biosynthesis; L-histidine biosynthesis; L-histidine from 5-phospho-alpha-D-ribose 1-diphosphate: step 6/9. The sequence is that of Imidazoleglycerol-phosphate dehydratase from Parafrankia sp. (strain EAN1pec).